A 183-amino-acid polypeptide reads, in one-letter code: Seminal plasma protein BSP-30 kDa (183 aa).

The N-terminal stretch at 1–25 (MAPLVGLFLIWAGASVFQQLHPVNG) is a signal peptide. A disordered region spans residues 23 to 47 (VNGGDIPDPGSKPTPPGMADELPTE). O-linked (GalNAc...) threonine glycosylation is found at Thr-36, Thr-46, Thr-57, Thr-58, Thr-59, and Thr-64. Fibronectin type-II domains are found at residues 92 to 136 (FEGP…FCTE) and 137 to 183 (RDEP…WKYC). 4 disulfides stabilise this stretch: Cys-97–Cys-121, Cys-111–Cys-134, Cys-142–Cys-168, and Cys-156–Cys-183.

This sequence belongs to the seminal plasma protein family.

Its subcellular location is the secreted. Its function is as follows. Binds to spermatozoa upon ejaculation and may play a role in sperm capacitation. Displays heparin-, gelatin- and phospholipid-binding activities. This Bos taurus (Bovine) protein is Seminal plasma protein BSP-30 kDa.